The sequence spans 459 residues: Putrescine aminotransferase (459 aa).

Residues 150–151 (GT) and glutamine 274 each bind pyridoxal 5'-phosphate. Position 300 is an N6-(pyridoxal phosphate)lysine (lysine 300). Threonine 332 lines the pyridoxal 5'-phosphate pocket.

Belongs to the class-III pyridoxal-phosphate-dependent aminotransferase family. Putrescine aminotransferase subfamily. It depends on pyridoxal 5'-phosphate as a cofactor.

It carries out the reaction an alkane-alpha,omega-diamine + 2-oxoglutarate = an omega-aminoaldehyde + L-glutamate. The enzyme catalyses putrescine + 2-oxoglutarate = 1-pyrroline + L-glutamate + H2O. The catalysed reaction is cadaverine + 2-oxoglutarate = 5-aminopentanal + L-glutamate. It participates in amine and polyamine degradation; putrescine degradation; 4-aminobutanal from putrescine (transaminase route): step 1/1. Its function is as follows. Catalyzes the aminotransferase reaction from putrescine to 2-oxoglutarate, leading to glutamate and 4-aminobutanal, which spontaneously cyclizes to form 1-pyrroline. This is the first step in one of two pathways for putrescine degradation, where putrescine is converted into 4-aminobutanoate (gamma-aminobutyrate or GABA) via 4-aminobutanal. Also functions as a cadaverine transaminase in a a L-lysine degradation pathway to succinate that proceeds via cadaverine, glutarate and L-2-hydroxyglutarate. In Enterobacter sp. (strain 638), this protein is Putrescine aminotransferase.